An 874-amino-acid polypeptide reads, in one-letter code: Ribosome biogenesis protein ERB1 (874 aa).

A disordered region spans residues 1-148; that stretch reads MAKKEVSASK…DAFAAADAAT (148 aa). Residues 27–41 are compositionally biased toward basic and acidic residues; sequence QAVEKEEAEKEKEEG. Positions 55 to 77 are enriched in acidic residues; sequence PESDSDDEGAAAAEEEEEEEEQQ. The segment covering 78-89 has biased composition (basic and acidic residues); it reads QDVKELDLDKGE. Composition is skewed to acidic residues over residues 95–104 and 128–139; these read SDAEDFDSEE and PKEDGDEQDEQD. The required for interaction with NOP7 stretch occupies residues 312-429; sequence RFVPSKHEAK…LRLVPGYQDS (118 aa). The tract at residues 429-465 is required for interaction with YTM1; sequence SVRERFERSLDLYLAPRLRKNKLNIDPESLIPELPSP. WD repeat units follow at residues 481 to 520 and 529 to 569; these read GHTGKIRTLSIDPQGLWLATGSDDGSVRIWEVLTGRQVFK and NGED…FEIE. Over residues 593–602 the composition is skewed to basic and acidic residues; sequence KVKGEDTKGD. The disordered stretch occupies residues 593–640; sequence KVKGEDTKGDLDDDEEEEEEEEDDDDDEGQGKVKAHNSTAPAKKDVAK. Positions 603 to 620 are enriched in acidic residues; sequence LDDDEEEEEEEEDDDDDE. WD repeat units lie at residues 658–700, 703–741, 744–783, 787–827, and 843–874; these read QCRR…SQSP, KSKGVIMDAKFHPFKPQLFVASQRQIKIYDLAQQTLLKK, PGVRLLSTIDLHPRGDNLLAASYDKRVLWHDLDLAATPYK, YHEK…DLMT, and INQIGVLDIVWHPKEAWLFSAGADGTARLWTT.

It belongs to the WD repeat BOP1/ERB1 family. Component of the NOP7 complex, composed of ERB1, NOP7 and YTM1. The complex is held together by ERB1, which interacts with NOP7 via its N-terminal domain and with YTM1 via a high-affinity interaction between the seven-bladed beta-propeller domains of the 2 proteins. The NOP7 complex associates with the 66S pre-ribosome.

The protein localises to the nucleus. Its subcellular location is the nucleolus. It is found in the nucleoplasm. Component of the NOP7 complex, which is required for maturation of the 25S and 5.8S ribosomal RNAs and formation of the 60S ribosome. This chain is Ribosome biogenesis protein ERB1, found in Lodderomyces elongisporus (strain ATCC 11503 / CBS 2605 / JCM 1781 / NBRC 1676 / NRRL YB-4239) (Yeast).